A 230-amino-acid chain; its full sequence is Ribonuclease 3 (230 aa).

The RNase III domain occupies 5–127 (HEHLARKLGI…ILGAVLRDQG (123 aa)). Glu40 is a binding site for Mg(2+). The active site involves Asp44. Positions 113 and 116 each coordinate Mg(2+). Residue Glu116 is part of the active site. Residues 154 to 224 (DPKTRLQELM…AENMLSRLSD (71 aa)) form the DRBM domain. The interval 202–230 (GEGSSRKKAEQQAAENMLSRLSDQSRFRV) is disordered.

The protein belongs to the ribonuclease III family. As to quaternary structure, homodimer. Mg(2+) is required as a cofactor.

The protein resides in the cytoplasm. It carries out the reaction Endonucleolytic cleavage to 5'-phosphomonoester.. Digests double-stranded RNA. Involved in the processing of primary rRNA transcript to yield the immediate precursors to the large and small rRNAs (23S and 16S). Processes some mRNAs, and tRNAs when they are encoded in the rRNA operon. Processes pre-crRNA and tracrRNA of type II CRISPR loci if present in the organism. In Methylococcus capsulatus (strain ATCC 33009 / NCIMB 11132 / Bath), this protein is Ribonuclease 3.